Consider the following 185-residue polypeptide: ATP-dependent protease subunit HslV (185 aa).

Thr12 is an active-site residue. Residues Ala168, Cys171, and Thr174 each coordinate Na(+).

It belongs to the peptidase T1B family. HslV subfamily. A double ring-shaped homohexamer of HslV is capped on each side by a ring-shaped HslU homohexamer. The assembly of the HslU/HslV complex is dependent on binding of ATP.

It localises to the cytoplasm. It catalyses the reaction ATP-dependent cleavage of peptide bonds with broad specificity.. Allosterically activated by HslU binding. Its function is as follows. Protease subunit of a proteasome-like degradation complex believed to be a general protein degrading machinery. The chain is ATP-dependent protease subunit HslV from Cereibacter sphaeroides (strain KD131 / KCTC 12085) (Rhodobacter sphaeroides).